The following is a 221-amino-acid chain: Vesicle-associated membrane protein 713 (221 aa).

The residue at position 2 (A2) is an N-acetylalanine. Residues 2-190 (AIIFALVARG…RTIMWWRNVK (189 aa)) lie on the Cytoplasmic side of the membrane. A Longin domain is found at 7–112 (LVARGTVVLS…SMNDEFSRVL (106 aa)). Residues 127 to 187 (RMSRIKGEMS…RRYRTIMWWR (61 aa)) enclose the v-SNARE coiled-coil homology domain. Residues 191–211 (LTIALILVLALVVYIAMAFVC) form a helical; Anchor for type IV membrane protein membrane-spanning segment. The Vesicular portion of the chain corresponds to 212–221 (HGPSLPSCFK).

This sequence belongs to the synaptobrevin family. Interacts with subunits of the vacuole protein sorting (HOPS) complex including VPS11, VCL1, VPS18, VPS33, VPS39 and VPS41. As to expression, highly expressed in stems and roots. Detected in flowers and leaves.

It is found in the vacuole membrane. The protein localises to the prevacuolar compartment membrane. In terms of biological role, involved in the targeting and/or fusion of transport vesicles to their target membrane. The chain is Vesicle-associated membrane protein 713 from Arabidopsis thaliana (Mouse-ear cress).